The sequence spans 1091 residues: Protein CTR9 homolog (1091 aa).

Alanine 2 bears the N-acetylalanine mark. 16 TPR repeats span residues 90-127, 128-161, 163-195, 197-230, 232-267, 305-338, 343-376, 377-410, 412-443, 449-482, 558-591, 593-625, 640-673, 674-707, 713-746, and 749-782; these read GAYY…DMHE, PSTW…APDN, PALL…FPGC, AAVR…DPDN, EALV…YPYC, SHSF…TNNN, VFPY…YPDN, CETL…DPRD, QAFV…MKKG, IEVL…GIWI, IDAY…DDKN, NALS…TDGK, AAMR…HNSN, MYAA…ASGS, PDVW…FFYN, and SQIL…TPSN. The segment at 919 to 1091 is disordered; it reads FQRIKEQWKS…EEEEEEEEAN (173 aa). The span at 951-965 shows a compositional bias: basic residues; that stretch reads ERRRKKGGKRRKKDK. 4 stretches are compositionally biased toward acidic residues: residues 974–993, 1003–1016, 1026–1035, and 1080–1091; these read DDEE…DEDA, MTTQ…DDDA, EDPDVDDDEV, and NMEEEEEEEEAN.

In terms of assembly, component of the nuclear PAF1 complex (PAF1C), which consists of VIP2/ELF7/PAF1, VIP3/SKI8/WDR61, VIP4/LEO1, VIP5/RTF1, VIP6/ELF8/CTR9 and CDC73. Interacts with VIP3 and VIP4. As to expression, expressed in roots, leaves and shoot apex.

The protein resides in the nucleus. In terms of biological role, component of the PAF1 complex (PAF1C) which is involved in histone modifications such as methylation on histone H3 'Lys-4' (H3K4me3). Involved in regulation of flowering time. Required for the expression of the MADS box genes and flowering repressors FLC, AGL27/FLM and AGL31/MAF2. Required for histone H3 trimethylation on 'Lys-4' H3K4me3 at the FLC and AGL27/FLM loci. Involved in the control of seed dormancy and germination. This Arabidopsis thaliana (Mouse-ear cress) protein is Protein CTR9 homolog.